The chain runs to 280 residues: Dermonecrotic toxin LsSicTox-alphaIA1 (280 aa).

His-12 is an active-site residue. Mg(2+)-binding residues include Glu-32 and Asp-34. The Nucleophile role is filled by His-48. 2 disulfides stabilise this stretch: Cys-52/Cys-58 and Cys-54/Cys-197. Asp-92 is a Mg(2+) binding site.

It belongs to the arthropod phospholipase D family. Class II subfamily. Mg(2+) serves as cofactor. Expressed by the venom gland.

The protein resides in the secreted. It carries out the reaction an N-(acyl)-sphingosylphosphocholine = an N-(acyl)-sphingosyl-1,3-cyclic phosphate + choline. The catalysed reaction is an N-(acyl)-sphingosylphosphoethanolamine = an N-(acyl)-sphingosyl-1,3-cyclic phosphate + ethanolamine. The enzyme catalyses a 1-acyl-sn-glycero-3-phosphocholine = a 1-acyl-sn-glycero-2,3-cyclic phosphate + choline. It catalyses the reaction a 1-acyl-sn-glycero-3-phosphoethanolamine = a 1-acyl-sn-glycero-2,3-cyclic phosphate + ethanolamine. Functionally, dermonecrotic toxins cleave the phosphodiester linkage between the phosphate and headgroup of certain phospholipids (sphingolipid and lysolipid substrates), forming an alcohol (often choline) and a cyclic phosphate. This toxin acts on sphingomyelin (SM). It may also act on ceramide phosphoethanolamine (CPE), lysophosphatidylcholine (LPC) and lysophosphatidylethanolamine (LPE), but not on lysophosphatidylserine (LPS), and lysophosphatidylglycerol (LPG). It acts by transphosphatidylation, releasing exclusively cyclic phosphate products as second products. Induces dermonecrosis, hemolysis, increased vascular permeability, edema, inflammatory response, and platelet aggregation. This Loxosceles similis (Brazilian brown spider) protein is Dermonecrotic toxin LsSicTox-alphaIA1.